Here is a 159-residue protein sequence, read N- to C-terminus: Ribosomal RNA large subunit methyltransferase H (159 aa).

S-adenosyl-L-methionine-binding positions include L76, G107, and 126-131; that span reads LSKLTM.

The protein belongs to the RNA methyltransferase RlmH family. In terms of assembly, homodimer.

Its subcellular location is the cytoplasm. The catalysed reaction is pseudouridine(1915) in 23S rRNA + S-adenosyl-L-methionine = N(3)-methylpseudouridine(1915) in 23S rRNA + S-adenosyl-L-homocysteine + H(+). In terms of biological role, specifically methylates the pseudouridine at position 1915 (m3Psi1915) in 23S rRNA. The sequence is that of Ribosomal RNA large subunit methyltransferase H from Acinetobacter baumannii (strain AB307-0294).